The following is an 896-amino-acid chain: MDTAEIRRRFVAHFEHNTTVGAHTPVPSASLLLDDPNLLFVNAGMVPFKPYFLGQEAPPYPRATSVQKCVRTPDIEDVGKTTRHGTFFEMCGNFSFGDYFKEGAIELAWDLVTRPLADGGWGLEESKLYPSVYEDDPEAVALWKKVTGLPEERIIRLGKRENYWSMGVPGPGGPCSEILYDRGPDYGPDGDFGPKGEDRYLEIWNLVFMQDELSAVRSKEDFDIAGSLPKKNIDTGMGLERVAFLLQGKANMYEIDVMFPVIQKAEELTGRRYGADHDDDVRFRVVADHVRSSMMLIGDGVTPGNEARGYVLRRLLRRAVRSMRLLGYEDPALPELFPISRDKMGETYTALHRDWERISTVAYAEEHAFRQTLRSGTTIFDQATAELKQAGGSQLSGDKAFALHDTYGFPIDLTLEMAAEQGLAVDEVGFRRLMNEQRQRAKDDAKAKKGQHRDASAYRQVADSLGRPVEFTGYDVVTDEASVRGLVAAGGVVSSAGPGDDVEIILDRTPFYAEGGGQLADQGVIELDNGARVEVRDVQSPVRGLIVHHATVLSGEVSIGLGAHALVDVERRRSISRSHTATHMVHKAFREALGETATQAGSENSPGRFRFDFSAVGAVPESVMADVEARVNEVVLDDLAVHAEVMSQADAVKSGAMALFGEKYGDRVRVVSVGDWARELCGGTHAGSSGKLGVVKLLGESSIGSGVRRVEALVGSDAYRFLAREHVLVAQLSDTLKVRPEQLPERVHDLVEKLREAEKEIERVRVGQLLAAAGELAAGAAKVGPVNLVAHRADGAGGGDVRTLALDVRGRLPQGEPGVVVVIGAVDGKVAVVAALNDEARARGLSANELVRAVGPLVGGKGGGKDDVAQGGGTDASRIDEAITLVTAEVGRVAAG.

The segment covering 439 to 456 (QRAKDDAKAKKGQHRDAS) has biased composition (basic and acidic residues). A disordered region spans residues 439-459 (QRAKDDAKAKKGQHRDASAYR). Zn(2+) is bound by residues His579, His583, Cys681, and His685.

It belongs to the class-II aminoacyl-tRNA synthetase family. Zn(2+) is required as a cofactor.

It localises to the cytoplasm. It carries out the reaction tRNA(Ala) + L-alanine + ATP = L-alanyl-tRNA(Ala) + AMP + diphosphate. Its function is as follows. Catalyzes the attachment of alanine to tRNA(Ala) in a two-step reaction: alanine is first activated by ATP to form Ala-AMP and then transferred to the acceptor end of tRNA(Ala). Also edits incorrectly charged Ser-tRNA(Ala) and Gly-tRNA(Ala) via its editing domain. The protein is Alanine--tRNA ligase of Nocardioides sp. (strain ATCC BAA-499 / JS614).